A 470-amino-acid chain; its full sequence is Ubiquitin carboxyl-terminal hydrolase calypso (470 aa).

Residues 11–241 (GWLELESDPG…ITHKLKMLRT (231 aa)) form the UCH catalytic domain. The active-site Nucleophile is C98. Catalysis depends on H177, which acts as the Proton donor. Residues 260–280 (ESRSQAEIRETVDKIKKEEQE) adopt a coiled-coil conformation. A ULD domain is found at 392–420 (NYDEFICTFLSMLAYQGELGDLVTQHLVT). Positions 422–470 (RKPSLGGVQNSGSRGVVRNYNKKSTTNGSSPKTPSSKRRRGRTKYRKRK) are positively charged C-terminal tail required for binding nucleosomes. Residues 423–434 (KPSLGGVQNSGS) show a composition bias toward polar residues. Residues 423 to 470 (KPSLGGVQNSGSRGVVRNYNKKSTTNGSSPKTPSSKRRRGRTKYRKRK) form a disordered region. Basic residues predominate over residues 456 to 470 (SSKRRRGRTKYRKRK).

The protein belongs to the peptidase C12 family. BAP1 subfamily. Catalytic component of the polycomb repressive deubiquitinase (PR-DUB) complex, at least composed of caly/calypso, Asx and sba (MBD5/6 homolog). The PR-DUB complex associates with nucleosomes to mediate deubiquitination of histone H2AK118ub1 substrates; the association requires the positively charged C-terminal tail of caly, probably due to direct binding of DNA. Interacts (via ULD domain) with Asx (via DEUBAD domain); the interaction produces a stable heterodimer with a composite binding site for ubiquitin. Homodimerizes (via coiled-coil hinge-region between the UCH and ULD domains) to mediate assembly of 2 copies of the caly-Asx heterodimer into a bisymmetric tetramer; dimerization enhances PR-DUB association with nucleosomes.

Its subcellular location is the nucleus. The enzyme catalyses Thiol-dependent hydrolysis of ester, thioester, amide, peptide and isopeptide bonds formed by the C-terminal Gly of ubiquitin (a 76-residue protein attached to proteins as an intracellular targeting signal).. Its function is as follows. Catalytic component of the polycomb repressive deubiquitinase (PR-DUB) complex, a complex that specifically mediates deubiquitination of histone H2A monoubiquitinated at 'Lys-119' (H2AK118ub1). Mediates bisymmetric organization of the PR-DUB complex and is involved in association with nucleosomes to mediate deubiquitination. Does not deubiquitinate monoubiquitinated histone H2B. Required to maintain the transcriptionally repressive state of homeotic genes throughout development. The PR-DUB complex has weak or no activity toward 'Lys-48'- and 'Lys-63'-linked polyubiquitin chains. Polycomb group (PcG) protein. This is Ubiquitin carboxyl-terminal hydrolase calypso from Culex quinquefasciatus (Southern house mosquito).